A 632-amino-acid polypeptide reads, in one-letter code: Actin-related protein 8 (632 aa).

Basic and acidic residues predominate over residues 1–30; it reads MTQAEREQENGKEKEKEREKEKEKEKEQRG. The segment at 1–43 is disordered; it reads MTQAEREQENGKEKEKEREKEKEKEKEQRGIKRPIAPPVIPEP. Residue 288–291 participates in ATP binding; it reads DVGD. 2 disordered regions span residues 410–429 and 434–494; these read MTSLQHRSQGDPEDPHDEHY and QSKQ…GGAE. Positions 434–443 are enriched in low complexity; that stretch reads QSKQDQSSKA.

Belongs to the actin family. ARP8 subfamily. Component of the chromatin remodeling INO80 complex; specifically part of a complex module associated with the DBINO domain of INO80. Exists as monomers and dimers, but the dimer is most probably the biologically relevant form required for stable interactions with histones that exploits the twofold symmetry of the nucleosome core.

It is found in the nucleus. The protein resides in the chromosome. Plays an important role in the functional organization of mitotic chromosomes. Exhibits low basal ATPase activity, and unable to polymerize. Functionally, proposed core component of the chromatin remodeling INO80 complex which is involved in transcriptional regulation, DNA replication and probably DNA repair. Required for the recruitment of INO80 (and probably the INO80 complex) to sites of DNA damage Strongly prefer nucleosomes and H3-H4 tetramers over H2A-H2B dimers, suggesting it may act as a nucleosome recognition module within the complex. The chain is Actin-related protein 8 (actr8) from Salmo salar (Atlantic salmon).